Here is a 651-residue protein sequence, read N- to C-terminus: Acetyl-coenzyme A synthetase (651 aa).

Residues 189–192 (RGGK), threonine 311, and asparagine 335 each bind CoA. ATP-binding positions include 387-389 (GEP), 411-416 (DTWWQT), aspartate 500, and arginine 515. Residue serine 523 participates in CoA binding. Arginine 526 provides a ligand contact to ATP. Mg(2+) contacts are provided by valine 537, histidine 539, and valine 542. A CoA-binding site is contributed by arginine 584. At lysine 609 the chain carries N6-acetyllysine.

The protein belongs to the ATP-dependent AMP-binding enzyme family. The cofactor is Mg(2+). In terms of processing, acetylated. Deacetylation by the SIR2-homolog deacetylase activates the enzyme.

The enzyme catalyses acetate + ATP + CoA = acetyl-CoA + AMP + diphosphate. Catalyzes the conversion of acetate into acetyl-CoA (AcCoA), an essential intermediate at the junction of anabolic and catabolic pathways. AcsA undergoes a two-step reaction. In the first half reaction, AcsA combines acetate with ATP to form acetyl-adenylate (AcAMP) intermediate. In the second half reaction, it can then transfer the acetyl group from AcAMP to the sulfhydryl group of CoA, forming the product AcCoA. The chain is Acetyl-coenzyme A synthetase from Rhizobium etli (strain ATCC 51251 / DSM 11541 / JCM 21823 / NBRC 15573 / CFN 42).